The sequence spans 303 residues: Cyclin-dependent kinase 4 (303 aa).

Position 2 is an N-acetylalanine (Ala-2). The 290-residue stretch at 6–295 (YEPVAEIGVG…AFRALQHSYL (290 aa)) folds into the Protein kinase domain. Residues 12–20 (IGVGAYGTV) and Lys-35 each bind ATP. The segment at 50-56 (PVSTVRE) is required for binding D-type cyclins. Asp-140 acts as the Proton acceptor in catalysis. At Thr-172 the chain carries Phosphothreonine; by CAK. Ser-300 carries the phosphoserine modification.

Belongs to the protein kinase superfamily. CMGC Ser/Thr protein kinase family. CDC2/CDKX subfamily. In terms of assembly, component of the D-CDK4 complex, composed of CDK4 and some D-type G1 cyclin (CCND1, CCND2 or CCND3). Interacts directly in the complex with CCND1, CCND2 or CCND3. Interacts with ZNF655. Forms a ternary complex, cyclin D-CDK4-CDKN1B, involved in modulating CDK4 enzymatic activity. Interacts directly with CDKN1B (phosphorylated on 'Tyr-88' and 'Tyr-89'); the interaction allows assembly of the cyclin D-CDK4 complex, Thr-172 phosphorylation, nuclear translocation and enhances the cyclin D-CDK4 complex activity. CDK4 activity is either inhibited or enhanced depending on stoichiometry of complex. The non-tyrosine-phosphorylated form of CDKN1B prevents T-loop phosphorylation of CDK4 producing inactive CDK4. Interacts (unphosphorylated form) with CDK2. Also forms ternary complexes with CDKN1A or CDKN2A. Interacts directly with CDKN1A (via its N-terminal); the interaction promotes the assembly of the cyclin D-CDK4 complex, its nuclear translocation and promotes the cyclin D-dependent enzyme activity of CDK4. Interacts with CCND1; the interaction is prevented with the binding of CCND1 to INSM1 during cell cycle progression. Interacts with SEI1 and CCND1. Probably forms a complex composed of chaperones HSP90 and HSP70, co-chaperones CDC37, PPP5C, TSC1 and client protein TSC2, CDK4, AKT, RAF1 and NR3C1; this complex does not contain co-chaperones STIP1/HOP and PTGES3/p23. Interacts with CEBPA (when phosphorylated). Interacts with FNIP1 and FNIP2. Phosphorylation at Thr-172 is required for enzymatic activity. Phosphorylated, in vitro, at this site by CCNH-CDK7, but, in vivo, appears to be phosphorylated by a proline-directed kinase. In the cyclin D-CDK4-CDKN1B complex, this phosphorylation and consequent CDK4 enzyme activity, is dependent on the tyrosine phosphorylation state of CDKN1B. Thus, in proliferating cells, CDK4 within the complex is phosphorylated on Thr-172 in the T-loop. In resting cells, phosphorylation on Thr-172 is prevented by the non-tyrosine-phosphorylated form of CDKN1B.

The protein resides in the cytoplasm. The protein localises to the nucleus. It is found in the nucleus membrane. The enzyme catalyses L-seryl-[protein] + ATP = O-phospho-L-seryl-[protein] + ADP + H(+). It carries out the reaction L-threonyl-[protein] + ATP = O-phospho-L-threonyl-[protein] + ADP + H(+). Its activity is regulated as follows. Both phosphorylation at Thr-172 and binding of a D-type cyclin are necessary for enzymatic activity. Full activation of the cyclin-D-CDK4 complex appears to require other factors such as recruitment of the substrate via a substrate recruitment motif, and/or formation of the CDKN1B ternary complex. Inhibited by INK4 family members. In resting cells, the non-tyrosine-phosphorylated form of CDKN1B prevents phosphorylation at Thr-172 and inactivation, while, in proliferating cells, tyrosine phosphorylation of CDKN1B allows phosphorylation of Thr-172 of CDK4 and subsequent activation. Its function is as follows. Ser/Thr-kinase component of cyclin D-CDK4 (DC) complexes that phosphorylate and inhibit members of the retinoblastoma (RB) protein family including RB1 and regulate the cell-cycle during G(1)/S transition. Phosphorylation of RB1 allows dissociation of the transcription factor E2F from the RB/E2F complexes and the subsequent transcription of E2F target genes which are responsible for the progression through the G(1) phase. Hypophosphorylates RB1 in early G(1) phase. Cyclin D-CDK4 complexes are major integrators of various mitogenenic and antimitogenic signals. Also phosphorylates SMAD3 in a cell-cycle-dependent manner and represses its transcriptional activity. Component of the ternary complex, cyclin D/CDK4/CDKN1B, required for nuclear translocation and activity of the cyclin D-CDK4 complex. In Mus musculus (Mouse), this protein is Cyclin-dependent kinase 4 (Cdk4).